Consider the following 402-residue polypeptide: Phosphoglycerate kinase (402 aa).

Substrate is bound by residues 30–32, Arg46, 70–73, Arg126, and Arg159; these read DFN and HLGR. ATP is bound by residues Lys210, Glu332, and 358-361; that span reads GGDT.

It belongs to the phosphoglycerate kinase family. As to quaternary structure, monomer.

The protein resides in the cytoplasm. It catalyses the reaction (2R)-3-phosphoglycerate + ATP = (2R)-3-phospho-glyceroyl phosphate + ADP. It functions in the pathway carbohydrate degradation; glycolysis; pyruvate from D-glyceraldehyde 3-phosphate: step 2/5. The chain is Phosphoglycerate kinase from Helicobacter hepaticus (strain ATCC 51449 / 3B1).